The primary structure comprises 354 residues: Glutamine synthetase (354 aa).

The region spanning 22–101 (IQAEYVWIDG…VLAETYNNDG (80 aa)) is the GS beta-grasp domain. Residues 108–354 (HRHHAKKVFD…IIAETTILDK (247 aa)) form the GS catalytic domain.

It belongs to the glutamine synthetase family. As to quaternary structure, homooctamer.

It is found in the cytoplasm. The catalysed reaction is L-glutamate + NH4(+) + ATP = L-glutamine + ADP + phosphate + H(+). This Agaricus bisporus (White button mushroom) protein is Glutamine synthetase (glnA).